The chain runs to 477 residues: Probable periplasmic serine endoprotease DegP-like (477 aa).

The first 27 residues, 1-27 (MSIPRLKSYLTMFAAVLMLGQVLTAQA), serve as a signal peptide directing secretion. Active-site charge relay system residues include His117, Asp147, and Ser220. Substrate contacts are provided by residues 218 to 220 (GNS) and 275 to 279 (LGVVI). PDZ domains lie at 264 to 355 (LKKD…IRNG) and 361 to 466 (DISV…LRQG).

The protein belongs to the peptidase S1C family.

It is found in the periplasm. It carries out the reaction Acts on substrates that are at least partially unfolded. The cleavage site P1 residue is normally between a pair of hydrophobic residues, such as Val-|-Val.. Might be efficient in the degradation of transiently denatured and unfolded proteins which accumulate in the periplasm following stress conditions. In Pseudomonas putida (strain GB-1), this protein is Probable periplasmic serine endoprotease DegP-like.